The chain runs to 282 residues: UDP-3-O-acyl-N-acetylglucosamine deacetylase (282 aa).

The Zn(2+) site is built by histidine 80, histidine 240, and aspartate 244. The active-site Proton donor is the histidine 267.

This sequence belongs to the LpxC family. Zn(2+) serves as cofactor.

It localises to the plastid. It is found in the chloroplast. The enzyme catalyses a UDP-3-O-[(3R)-3-hydroxyacyl]-N-acetyl-alpha-D-glucosamine + H2O = a UDP-3-O-[(3R)-3-hydroxyacyl]-alpha-D-glucosamine + acetate. Its pathway is glycolipid biosynthesis; lipid IV(A) biosynthesis; lipid IV(A) from (3R)-3-hydroxytetradecanoyl-[acyl-carrier-protein] and UDP-N-acetyl-alpha-D-glucosamine: step 2/6. Catalyzes the hydrolysis of UDP-3-O-myristoyl-N-acetylglucosamine to form UDP-3-O-myristoylglucosamine and acetate. Involved in the biosynthesis of lipid A, a phosphorylated glycolipid that in bacteria anchors the lipopolysaccharide to the outer membrane of the cell. The target for the lipopolysaccharides produced in the chloroplast could either be the cell envelope of the eukaryote or the plastid membrane. This chain is UDP-3-O-acyl-N-acetylglucosamine deacetylase, found in Cyanidium caldarium (Red alga).